We begin with the raw amino-acid sequence, 124 residues long: MTETRFSKDHEWVRLDGDVATVGITDHAQSALGDVVFVELPETGRHVDAGEACAVVESVKAASDVYAPLAGTVTEANGALADDPGMVNAQAESGAWFFRMTLDDRAAFDALLTADDYQAFLATL.

In terms of domain architecture, Lipoyl-binding spans 19–101; the sequence is VATVGITDHA…ESGAWFFRMT (83 aa). Lysine 60 carries the post-translational modification N6-lipoyllysine.

It belongs to the GcvH family. The glycine cleavage system is composed of four proteins: P, T, L and H. (R)-lipoate serves as cofactor.

Functionally, the glycine cleavage system catalyzes the degradation of glycine. The H protein shuttles the methylamine group of glycine from the P protein to the T protein. The sequence is that of Glycine cleavage system H protein from Acidiphilium cryptum (strain JF-5).